The sequence spans 216 residues: Ribosome maturation factor RimP (216 aa).

The protein belongs to the RimP family.

It is found in the cytoplasm. Its function is as follows. Required for maturation of 30S ribosomal subunits. The chain is Ribosome maturation factor RimP from Bartonella henselae (strain ATCC 49882 / DSM 28221 / CCUG 30454 / Houston 1) (Rochalimaea henselae).